The chain runs to 379 residues: MAKRDYYEVLGVSRDAEEREIKKAYKRLAMKFHPDRQSEDKNAEEKFKEAKEAYEILTDAQKRAAYDQYGHAAFEQGGMGGGGFGGGGGGADFSDIFGDVFGDIFGGGRRQQRASRGSDLRYNMDLTLEEAVRGVTKEIRIPTLDECDVCHGSGAKPGSSPVTCPTCHGAGQVQMRQGFFTVQQACPHCHGRGQIIKDPCNKCHGHGRVEKSKTLSVKIPAGVDTGDRIRLSGEGEAGEHGAPSGDLYVQVQVKAHPIFEREGNNLYCEVPINFAMAALGGEIEVPTLDGRVKLKIPAETQTGKMFRMRGKGVKSVRGGSQGDLLCRVVVETPVSLSEKQKQLLRELEESFVGAAGEKNSPRAKSFLDGVKKFFDDLTR.

Residues 5–70 enclose the J domain; the sequence is DYYEVLGVSR…QKRAAYDQYG (66 aa). A CR-type zinc finger spans residues 134-212; sequence GVTKEIRIPT…CHGHGRVEKS (79 aa). Zn(2+) is bound by residues C147, C150, C164, C167, C186, C189, C200, and C203. CXXCXGXG motif repeat units follow at residues 147–154, 164–171, 186–193, and 200–207; these read CDVCHGSG, CPTCHGAG, CPHCHGRG, and CNKCHGHG.

The protein belongs to the DnaJ family. In terms of assembly, homodimer. Requires Zn(2+) as cofactor.

The protein resides in the cytoplasm. Participates actively in the response to hyperosmotic and heat shock by preventing the aggregation of stress-denatured proteins and by disaggregating proteins, also in an autonomous, DnaK-independent fashion. Unfolded proteins bind initially to DnaJ; upon interaction with the DnaJ-bound protein, DnaK hydrolyzes its bound ATP, resulting in the formation of a stable complex. GrpE releases ADP from DnaK; ATP binding to DnaK triggers the release of the substrate protein, thus completing the reaction cycle. Several rounds of ATP-dependent interactions between DnaJ, DnaK and GrpE are required for fully efficient folding. Also involved, together with DnaK and GrpE, in the DNA replication of plasmids through activation of initiation proteins. This chain is Chaperone protein DnaJ, found in Yersinia pestis bv. Antiqua (strain Antiqua).